Here is a 490-residue protein sequence, read N- to C-terminus: Xylulose kinase (490 aa).

4 residues coordinate substrate: His-99, Arg-170, Asp-280, and Asn-281. ATP is bound by residues Trp-355, 441–442 (GA), and Asn-445.

The protein belongs to the FGGY kinase family. As to quaternary structure, monomer.

It carries out the reaction D-xylulose + ATP = D-xylulose 5-phosphate + ADP + H(+). Its function is as follows. Phosphorylates D-xylulose to produce D-xylulose 5-phosphate, a molecule that may play an important role in the regulation of glucose metabolism and lipogenesis. The sequence is that of Xylulose kinase (XYLB) from Bos taurus (Bovine).